Here is a 191-residue protein sequence, read N- to C-terminus: Protein Ves (191 aa).

Belongs to the Ves family.

In Escherichia coli (strain SE11), this protein is Protein Ves.